Consider the following 682-residue polypeptide: Iron-phytosiderophore transporter yellow stripe 1 (682 aa).

The disordered stretch occupies residues 1-36 (MDLARRGGAAGADDEGEIERHEPAPEDMESDPAAAR). Transmembrane regions (helical) follow at residues 56–76 (GVVAALLIGFMYSVIVMKIAL), 79–99 (GLVPTLNVSAALMAFLALRGW), 124–144 (CAVACYTIAFGGGFGSTLLGL), 167–187 (GFGWMAGFVAAISFAGLLSLI), 236–256 (LSFVWSFFQWFYTGGEVCGFV), 288–308 (LVNISTLLGAILSWGILWPLI), 334–354 (FLCIALIMGDGTYHFFKVFGV), 396–416 (FPAWAAYAGYAALTVVSAVII), 428–448 (VIVAYVLAPLLGFANSYGTGL), 460–480 (IALFIFAAWAGRDNGVIAGLA), 514–534 (VAQFIGTAMGCVVAPLTFLLF), 549–569 (APYGLIYRNMAILGVEGFSVL), 574–594 (LALSAGFFAFAFVFSVARDVL), 612–632 (FLVGGSFAIDMCVGSLAVFVW), and 640–660 (AVFMVPAVASGLICGDGIWTF).

The protein belongs to the YSL (TC 2.A.67.2) family. As to expression, expressed in roots of young maize seedlings. Not detected in leaves of iron-sufficient plants, but accumulates in roots and leaves of iron-deficient plants.

The protein resides in the membrane. Involved in Fe(3+) uptake. Acts as a proton-coupled symporter for phytosiderophore- and nicotianamine-chelated metals. Capable of transporting either Fe(2+)-nicotianamine or Fe(3+)-phytosiderophore. May transport iron, zinc, nickel, copper and, at a lower rate, manganese and cadmium. The sequence is that of Iron-phytosiderophore transporter yellow stripe 1 (YS1) from Zea mays (Maize).